A 583-amino-acid polypeptide reads, in one-letter code: Asparagine synthetase, root [glutamine-hydrolyzing] (583 aa).

Cysteine 2 (for GATase activity) is an active-site residue. The Glutamine amidotransferase type-2 domain maps to 2–185 (CGILAVLGCS…PGHLYSSKDS (184 aa)). Residues 50 to 54 (RLAIV), 75 to 77 (NGE), and aspartate 98 contribute to the L-glutamine site. ATP contacts are provided by residues leucine 231, valine 267, and 341–342 (SG). An Asparagine synthetase domain is found at 237-516 (DSSLVASITS…PQNSARLTVP (280 aa)).

As to expression, roots.

It catalyses the reaction L-aspartate + L-glutamine + ATP + H2O = L-asparagine + L-glutamate + AMP + diphosphate + H(+). The protein operates within amino-acid biosynthesis; L-asparagine biosynthesis; L-asparagine from L-aspartate (L-Gln route): step 1/1. The chain is Asparagine synthetase, root [glutamine-hydrolyzing] (AS2) from Pisum sativum (Garden pea).